The sequence spans 169 residues: NADH-quinone oxidoreductase subunit B (169 aa).

Residues C42, C43, C107, and C136 each coordinate [4Fe-4S] cluster.

This sequence belongs to the complex I 20 kDa subunit family. As to quaternary structure, NDH-1 is composed of 14 different subunits. Subunits NuoB, C, D, E, F, and G constitute the peripheral sector of the complex. [4Fe-4S] cluster is required as a cofactor.

It localises to the cell inner membrane. It carries out the reaction a quinone + NADH + 5 H(+)(in) = a quinol + NAD(+) + 4 H(+)(out). Functionally, NDH-1 shuttles electrons from NADH, via FMN and iron-sulfur (Fe-S) centers, to quinones in the respiratory chain. Couples the redox reaction to proton translocation (for every two electrons transferred, four hydrogen ions are translocated across the cytoplasmic membrane), and thus conserves the redox energy in a proton gradient. The chain is NADH-quinone oxidoreductase subunit B from Campylobacter hominis (strain ATCC BAA-381 / DSM 21671 / CCUG 45161 / LMG 19568 / NCTC 13146 / CH001A).